Here is a 252-residue protein sequence, read N- to C-terminus: Chitooligosaccharide deacetylase (252 aa).

2 residues coordinate Mg(2+): histidine 61 and histidine 125.

The protein belongs to the YdjC deacetylase family. ChbG subfamily. In terms of assembly, homodimer. Mg(2+) is required as a cofactor.

The protein localises to the cytoplasm. It catalyses the reaction N,N'-diacetylchitobiose + H2O = N-acetyl-beta-D-glucosaminyl-(1-&gt;4)-D-glucosamine + acetate. The enzyme catalyses diacetylchitobiose-6'-phosphate + H2O = N'-monoacetylchitobiose-6'-phosphate + acetate. Its pathway is glycan degradation; chitin degradation. Functionally, involved in the degradation of chitin. ChbG is essential for growth on the acetylated chitooligosaccharides chitobiose and chitotriose but is dispensable for growth on cellobiose and chitosan dimer, the deacetylated form of chitobiose. Deacetylation of chitobiose-6-P and chitotriose-6-P is necessary for both the activation of the chb promoter by the regulatory protein ChbR and the hydrolysis of phosphorylated beta-glucosides by the phospho-beta-glucosidase ChbF. Catalyzes the removal of only one acetyl group from chitobiose-6-P to yield monoacetylchitobiose-6-P, the inducer of ChbR and the substrate of ChbF. This Escherichia coli O6:H1 (strain CFT073 / ATCC 700928 / UPEC) protein is Chitooligosaccharide deacetylase.